Reading from the N-terminus, the 323-residue chain is Prenyl transferase (323 aa).

Isopentenyl diphosphate contacts are provided by lysine 46, arginine 49, and histidine 81. The Mg(2+) site is built by aspartate 88 and aspartate 92. Arginine 97 provides a ligand contact to an all-trans-polyprenyl diphosphate. Arginine 98 lines the isopentenyl diphosphate pocket. Residues lysine 174, threonine 175, and glutamine 212 each contribute to the an all-trans-polyprenyl diphosphate site.

It belongs to the FPP/GGPP synthase family. Mg(2+) is required as a cofactor.

Its subcellular location is the plastid. It localises to the chloroplast. Its function is as follows. Possible role in synthesis of the nonaprenyl side chain of plastoquinone or in synthesis of other prenyl chains such as undekaprenyl pyrophosphate. This chain is Prenyl transferase (preA), found in Porphyra purpurea (Red seaweed).